Consider the following 503-residue polypeptide: Lysine--tRNA ligase (503 aa).

The Mg(2+) site is built by Glu-410 and Glu-417.

This sequence belongs to the class-II aminoacyl-tRNA synthetase family. As to quaternary structure, homodimer. The cofactor is Mg(2+).

The protein localises to the cytoplasm. It carries out the reaction tRNA(Lys) + L-lysine + ATP = L-lysyl-tRNA(Lys) + AMP + diphosphate. The protein is Lysine--tRNA ligase of Prochlorococcus marinus (strain MIT 9211).